Reading from the N-terminus, the 862-residue chain is Autotaxin (862 aa).

The signal sequence occupies residues 1–27 (MARQGCFGSYQVISLFTFAIGVNLCLG). A propeptide spans 28–35 (FTASRIKR) (removed by furin). N-linked (GlcNAc...) asparagine glycosylation occurs at Asn-53. SMB domains follow at residues 54 to 97 (TSGS…LKTA) and 98 to 142 (RGWE…GESH). 10 cysteine pairs are disulfide-bonded: Cys-58/Cys-75, Cys-62/Cys-93, Cys-73/Cys-86, Cys-79/Cys-85, Cys-102/Cys-119, Cys-107/Cys-137, Cys-117/Cys-130, Cys-123/Cys-129, Cys-148/Cys-194, and Cys-156/Cys-350. Positions 126–128 (RGD) match the Cell attachment site motif. Residues 144–501 (VDDDCEEIRV…PTFKYRTKVP (358 aa)) are phosphodiesterase domain. The Zn(2+) site is built by Asp-171 and Thr-209. Thr-209 (nucleophile) is an active-site residue. 1-(9Z-octadecenoyl)-sn-glycero-3-phosphate is bound by residues Thr-209, Asn-230, and Asp-311. Positions 209, 230, and 311 each coordinate 1-hexadecanoyl-sn-glycero-3-phosphate. 1-tetradecanoyl-sn-glycerol 3-phosphate is bound by residues Thr-209, Asn-230, and Asp-311. Residues Asp-311, His-315, Asp-358, and His-359 each contribute to the Zn(2+) site. Intrachain disulfides connect Cys-366-Cys-468, Cys-413-Cys-805, Cys-566-Cys-666, Cys-568-Cys-651, and Cys-774-Cys-784. A glycan (N-linked (GlcNAc...) asparagine) is linked at Asn-410. His-474 contacts Zn(2+). His-474 provides a ligand contact to 1-(9Z-octadecenoyl)-sn-glycero-3-phosphate. His-474 contacts 1-hexadecanoyl-sn-glycero-3-phosphate. His-474 provides a ligand contact to 1-tetradecanoyl-sn-glycerol 3-phosphate. N-linked (GlcNAc...) asparagine glycosylation occurs at Asn-524. A nuclease-like domain region spans residues 597–862 (LYGRPAVLYR…TYLHTYESEI (266 aa)). Positions 739, 741, 743, 745, and 747 each coordinate Ca(2+). Asn-806 carries N-linked (GlcNAc...) asparagine glycosylation. The segment at 829–850 (IEHLTGLDFYRKTSRSYSEILT) is required for secretion.

This sequence belongs to the nucleotide pyrophosphatase/phosphodiesterase family. It depends on Zn(2+) as a cofactor. Requires Ca(2+) as cofactor. In terms of processing, N-glycosylation, but not furin-cleavage, plays a critical role on secretion and on lysoPLD activity. Secretion requires simultaneous glycosylation on Asn-53 and Asn-410, while probable glycosylation of Asn-410 has a preferential role on lysoPLD activity. Not O-glycosylated. The interdomain disulfide bond between Cys-413 and Cys-805 is essential for catalytic activity. Expressed in brain and adipose tissue.

It localises to the secreted. The enzyme catalyses a 1-O-alkyl-sn-glycero-3-phosphoethanolamine + H2O = a 1-O-alkyl-sn-glycero-3-phosphate + ethanolamine + H(+). It carries out the reaction a 1-acyl-sn-glycero-3-phosphoethanolamine + H2O = a 1-acyl-sn-glycero-3-phosphate + ethanolamine + H(+). The catalysed reaction is 1-(9Z-octadecenoyl)-sn-glycero-3-phosphoethanolamine + H2O = 1-(9Z-octadecenoyl)-sn-glycero-3-phosphate + ethanolamine + H(+). It catalyses the reaction a 1-O-alkyl-sn-glycero-3-phosphocholine + H2O = a 1-O-alkyl-sn-glycero-3-phosphate + choline + H(+). The enzyme catalyses 1-O-(9Z-octadecenyl)-sn-glycero-3-phosphocholine + H2O = 1-O-(9Z-octadecenyl)-sn-glycero-3-phosphate + choline + H(+). It carries out the reaction 1-O-hexadecyl-sn-glycero-3-phosphocholine + H2O = 1-O-hexadecyl-sn-glycero-3-phosphate + choline + H(+). The catalysed reaction is a 1-O-(1Z-alkenyl)-sn-glycero-3-phosphocholine + H2O = a 1-O-(1Z-alkenyl)-sn-glycero-3-phosphate + choline + H(+). It catalyses the reaction a 1-acyl-sn-glycero-3-phosphocholine + H2O = a 1-acyl-sn-glycero-3-phosphate + choline + H(+). The enzyme catalyses 1-dodecanoyl-sn-glycero-3-phosphocholine + H2O = 1-dodecanoyl-sn-glycerol 3-phosphate + choline + H(+). It carries out the reaction 1-(9Z-octadecenoyl)-sn-glycero-3-phosphocholine + H2O = 1-(9Z-octadecenoyl)-sn-glycero-3-phosphate + choline + H(+). The catalysed reaction is 1-tetradecanoyl-sn-glycero-3-phosphocholine + H2O = 1-tetradecanoyl-sn-glycerol 3-phosphate + choline + H(+). It catalyses the reaction 1-decanoyl-sn-glycero-3-phosphocholine + H2O = 1-decanoyl-sn-glycero-3-phosphate + choline + H(+). The enzyme catalyses 1-octadecanoyl-sn-glycero-3-phosphocholine + H2O = 1-octadecanoyl-sn-glycero-3-phosphate + choline + H(+). It carries out the reaction 1-hexadecanoyl-sn-glycero-3-phosphocholine + H2O = 1-hexadecanoyl-sn-glycero-3-phosphate + choline + H(+). The catalysed reaction is 1-hexanoyl-sn-glycero-3-phosphocholine + H2O = 1-hexanoyl-sn-glycero-3-phosphate + choline + H(+). It catalyses the reaction 1-(9Z,12Z)-octadecadienoyl-sn-glycero-3-phosphocholine + H2O = 1-(9Z,12Z)-octadecadienoyl-sn-glycero-3-phosphate + choline + H(+). The enzyme catalyses sphing-4-enine-phosphocholine + H2O = sphing-4-enine 1-phosphate + choline + H(+). It carries out the reaction 1-(5Z,8Z,11Z,14Z-eicosatetraenoyl)-sn-glycero-3-phosphocholine + H2O = 1-(5Z,8Z,11Z,14Z-eicosatetraenoyl)-sn-glycero-3-phosphate + choline + H(+). The catalysed reaction is a 2-acyl-sn-glycero-3-phosphocholine + H2O = a 2-acyl-sn-glycerol 3-phosphate + choline + H(+). It catalyses the reaction a 1,2-diacyl-sn-glycero-3-phosphocholine + H2O = a 1,2-diacyl-sn-glycero-3-phosphate + choline + H(+). The enzyme catalyses 1,2-dioctanoyl-sn-glycero-3-phosphocholine + H2O = 1,2-dioctanoyl-sn-glycero-3-phosphate + choline + H(+). It carries out the reaction 1,2-didecanoyl-sn-glycero-3-phosphocholine + H2O = 1,2-didecanoyl-sn-glycero-3-phosphate + choline + H(+). The catalysed reaction is a 1-acyl-sn-glycero-3-phospho-L-serine + H2O = a 1-acyl-sn-glycero-3-phosphate + L-serine + H(+). It catalyses the reaction 1-(9Z-octadecenoyl)-sn-glycero-3-phospho-L-serine + H2O = 1-(9Z-octadecenoyl)-sn-glycero-3-phosphate + L-serine + H(+). The enzyme catalyses a 2-acyl-sn-glycero-3-phospho-L-serine + H2O = a 2-acyl-sn-glycerol 3-phosphate + L-serine + H(+). With respect to regulation, inhibited by EDTA and EGTA. Functionally, secreted lysophospholipase D that hydrolyzes lysophospholipids to produce the signaling molecule lysophosphatidic acid (LPA) in extracellular fluids. Its major substrate is lysophosphatidylcholine. Can also act on sphingosylphosphorylcholine producing sphingosine-1-phosphate, a modulator of cell motility. Can hydrolyze, in vitro, bis-pNPP, to some extent pNP-TMP, and barely ATP. Involved in several motility-related processes such as angiogenesis and neurite outgrowth. Acts as an angiogenic factor by stimulating migration of smooth muscle cells and microtubule formation. Stimulates migration of melanoma cells, probably via a pertussis toxin-sensitive G protein. May have a role in induction of parturition. Possible involvement in cell proliferation and adipose tissue development. Required for LPA production in activated platelets, cleaves the sn-1 lysophospholipids to generate sn-1 lysophosphatidic acids containing predominantly 18:2 and 20:4 fatty acids. Shows a preference for the sn-1 to the sn-2 isomer of 1-O-alkyl-sn-glycero-3-phosphocholine (lyso-PAF). In Mus musculus (Mouse), this protein is Autotaxin.